The primary structure comprises 120 residues: UPF0231 protein KPK_4613 (120 aa).

It belongs to the UPF0231 family.

The sequence is that of UPF0231 protein KPK_4613 from Klebsiella pneumoniae (strain 342).